A 592-amino-acid polypeptide reads, in one-letter code: Arginine--tRNA ligase (592 aa).

The 'HIGH' region signature appears at 123 to 133 (PNTNKPLHLGH).

This sequence belongs to the class-I aminoacyl-tRNA synthetase family. As to quaternary structure, monomer.

It is found in the cytoplasm. It catalyses the reaction tRNA(Arg) + L-arginine + ATP = L-arginyl-tRNA(Arg) + AMP + diphosphate. This Flavobacterium johnsoniae (strain ATCC 17061 / DSM 2064 / JCM 8514 / BCRC 14874 / CCUG 350202 / NBRC 14942 / NCIMB 11054 / UW101) (Cytophaga johnsonae) protein is Arginine--tRNA ligase.